A 251-amino-acid chain; its full sequence is GTP cyclohydrolase 1 type 2 homolog (251 aa).

A divalent metal cation contacts are provided by His64, His65, Asp102, His219, and Glu223.

The protein belongs to the GTP cyclohydrolase I type 2/NIF3 family. As to quaternary structure, homohexamer.

The sequence is that of GTP cyclohydrolase 1 type 2 homolog from Chlamydia trachomatis serovar D (strain ATCC VR-885 / DSM 19411 / UW-3/Cx).